A 523-amino-acid polypeptide reads, in one-letter code: Protein NAM8 (523 aa).

A disordered region spans residues 1-35 (MSYKQTTYYPSRGNLVRNDSSPYTNTISSETNNSS). The span at 24 to 35 (TNTISSETNNSS) shows a compositional bias: low complexity. RRM domains follow at residues 54–145 (NQLY…WATS), 163–242 (CSIF…PTSG), and 313–385 (TTVF…WGRS). Positions 239-260 (PTSGQQQHVSGNNDYNRSSSSL) are disordered. Positions 240–260 (TSGQQQHVSGNNDYNRSSSSL) are enriched in polar residues.

As to quaternary structure, component of the U1 small nuclear ribonucleoprotein complex (U1 snRNP).

Its function is as follows. Component of the U1 small nuclear ribonucleoprotein complex (U1 snRNP) involved in the initiation of meiotic recombination. Involved in the formation of DSBs at recombination hot-spots through meiosis-specific splicing of REC107 pre-mRNA. Collaborates with MER1 to promote splicing of essential meiotic mRNAs REC10, AMA1, MER3, HFM1, SPO22 and PCH2. NAM8 interacts with the pre-mRNA downstream of the 5' splice site, in a region of non-conserved sequence and is required for efficient splicing of uncapped RNA precursor. In Saccharomyces cerevisiae (strain ATCC 204508 / S288c) (Baker's yeast), this protein is Protein NAM8.